The sequence spans 417 residues: Serine/threonine-protein phosphatase 4 regulatory subunit 2 (417 aa).

Composition is skewed to polar residues over residues 140–149 (EKNNSNSLNR), 158–170 (NSPS…NING), and 186–196 (APMTTNGLPES). Residues 140–417 (EKNNSNSLNR…EVTDEPMEQD (278 aa)) are disordered. Serine 159 is subject to Phosphoserine. Over residues 197–213 (TDSKEANLQQNEEKNHS) the composition is skewed to basic and acidic residues. Positions 214–226 (DSSTSESEVSSVS) are enriched in low complexity. Serine 226 is modified (phosphoserine). The segment covering 231–258 (KHPDEDAVEAEGHEVKRLRFDKEGEVRE) has biased composition (basic and acidic residues). Over residues 259–269 (TASQTTSSEIS) the composition is skewed to polar residues. The span at 283–297 (QDKDKDSRCTRQHCT) shows a compositional bias: basic and acidic residues. A compositionally biased stretch (acidic residues) spans 298 to 311 (EEDEEEDEEEEEES). Basic and acidic residues predominate over residues 318-327 (MIPERKNQEK). The span at 338–350 (ETSEENNQMEESD) shows a compositional bias: acidic residues. The segment covering 353 to 363 (QAEKDLLHSEG) has biased composition (basic and acidic residues). The segment covering 366-375 (NEGPVSSSSS) has biased composition (low complexity). The span at 385–399 (GSNSSKTGEILSESS) shows a compositional bias: polar residues. Acidic residues predominate over residues 400–417 (MENDDEATEVTDEPMEQD).

Belongs to the PPP4R2 family. In terms of assembly, serine/threonine-protein phosphatase 4 (PP4) occurs in different assemblies of the catalytic and one or more regulatory subunits. Component of the PP4 complexes PPP4C-PPP4R2, PPP4C-PPP4R2-PPP4R3A and PPP4C-PPP4R2-PPP4R3B. The PPP4C-PPP4R2 complex appears to be a tetramer composed of 2 molecules of PPP4C and 2 molecules of PPP4R2. Interacts with DDX20/GEMIN3 and GEMIN4. Interacts with RPA2; this DNA damage-dependent interaction recruits PPP4C leading to RPA2 dephosphorylation. In terms of tissue distribution, widely expressed.

It localises to the cytoplasm. The protein localises to the cytoskeleton. The protein resides in the microtubule organizing center. It is found in the centrosome. Its subcellular location is the nucleus. Regulatory subunit of serine/threonine-protein phosphatase 4 (PP4). May regulate the activity of PPP4C at centrosomal microtubule organizing centers. Its interaction with the SMN complex leads to enhance the temporal localization of snRNPs, suggesting a role of PPP4C in maturation of spliceosomal snRNPs. The PPP4C-PPP4R2-PPP4R3A PP4 complex specifically dephosphorylates H2AX phosphorylated on 'Ser-140' (gamma-H2AX) generated during DNA replication and required for DNA double strand break repair. Mediates RPA2 dephosphorylation by recruiting PPP4C to RPA2 in a DNA damage-dependent manner. RPA2 dephosphorylation is required for the efficient RPA2-mediated recruitment of RAD51 to chromatin following double strand breaks, an essential step for DNA repair. This is Serine/threonine-protein phosphatase 4 regulatory subunit 2 (PPP4R2) from Homo sapiens (Human).